The sequence spans 570 residues: Protein misato homolog 1 (570 aa).

Serine 495 carries the phosphoserine modification.

It belongs to the misato family.

The protein resides in the mitochondrion outer membrane. The protein localises to the cytoplasm. Its function is as follows. Involved in the regulation of mitochondrial distribution and morphology. Required for mitochondrial fusion and mitochondrial network formation. The polypeptide is Protein misato homolog 1 (MSTO1) (Pongo pygmaeus (Bornean orangutan)).